We begin with the raw amino-acid sequence, 192 residues long: uncharacterized protein (192 aa).

The N-terminal stretch at 1–24 is a signal peptide; the sequence is MSGVLSCVLRACACAGLCCWVCMG. Residues 140–192 are disordered; it reads RAGADEGAGGNAAGCPEDTRGFARSPGDLMGGMNGDLGDEGETGEGGDNGAGE.

This is an uncharacterized protein from Human herpesvirus 6A (strain Uganda-1102) (HHV-6 variant A).